Reading from the N-terminus, the 245-residue chain is 8-amino-3,8-dideoxy-manno-octulosonate cytidylyltransferase (245 aa).

Belongs to the KdsB family.

It localises to the cytoplasm. It carries out the reaction 8-amino-3,8-dideoxy-alpha-D-manno-octulosonate + CTP = CMP-8-amino-3,8-dideoxy-alpha-D-manno-oct-2-ulosonate + diphosphate. Its pathway is bacterial outer membrane biogenesis; lipopolysaccharide biosynthesis. Functionally, activates KDO8N (a required 8-carbon sugar) for incorporation into bacterial lipopolysaccharide in the Shewanella genus. This Shewanella piezotolerans (strain WP3 / JCM 13877) protein is 8-amino-3,8-dideoxy-manno-octulosonate cytidylyltransferase.